A 377-amino-acid chain; its full sequence is Cobalt-precorrin-5B C(1)-methyltransferase (377 aa).

Residues methionine 1–glycine 21 are disordered.

The protein belongs to the CbiD family.

The enzyme catalyses Co-precorrin-5B + S-adenosyl-L-methionine = Co-precorrin-6A + S-adenosyl-L-homocysteine. It participates in cofactor biosynthesis; adenosylcobalamin biosynthesis; cob(II)yrinate a,c-diamide from sirohydrochlorin (anaerobic route): step 6/10. Its function is as follows. Catalyzes the methylation of C-1 in cobalt-precorrin-5B to form cobalt-precorrin-6A. This Chromobacterium violaceum (strain ATCC 12472 / DSM 30191 / JCM 1249 / CCUG 213 / NBRC 12614 / NCIMB 9131 / NCTC 9757 / MK) protein is Cobalt-precorrin-5B C(1)-methyltransferase.